The chain runs to 245 residues: Ribonuclease PH (245 aa).

Phosphate-binding positions include Arg-93 and 131–133 (GTR).

This sequence belongs to the RNase PH family. As to quaternary structure, homohexameric ring arranged as a trimer of dimers.

It carries out the reaction tRNA(n+1) + phosphate = tRNA(n) + a ribonucleoside 5'-diphosphate. Phosphorolytic 3'-5' exoribonuclease that plays an important role in tRNA 3'-end maturation. Removes nucleotide residues following the 3'-CCA terminus of tRNAs; can also add nucleotides to the ends of RNA molecules by using nucleoside diphosphates as substrates, but this may not be physiologically important. Probably plays a role in initiation of 16S rRNA degradation (leading to ribosome degradation) during starvation. The polypeptide is Ribonuclease PH (Corynebacterium glutamicum (strain R)).